Reading from the N-terminus, the 394-residue chain is Dimethyladenosine transferase 2, mitochondrial (394 aa).

Residues 1-19 (MWVPGAGIPSRLTLSAFTR) constitute a mitochondrion transit peptide. V75, E123, and D149 together coordinate S-adenosyl-L-methionine. A DNA-binding region spans residues 326 to 327 (KR).

The protein belongs to the class I-like SAM-binding methyltransferase superfamily. rRNA adenine N(6)-methyltransferase family. KsgA subfamily. In terms of assembly, homodimer. Component of the mitochondrial transcription initiation complex, composed at least of TFB2M, TFAM and POLRMT. In this complex TFAM recruits POLRMT to the promoter whereas TFB2M induces structural changes in POLRMT to enable promoter opening and trapping of the DNA non-template strand. Interacts with mitochondrial RNA polymerase POLRMT. Interacts with TFAM.

It localises to the mitochondrion. The enzyme catalyses adenosine in rRNA + S-adenosyl-L-methionine = N(6)-methyladenosine in rRNA + S-adenosyl-L-homocysteine + H(+). S-adenosyl-L-methionine-dependent rRNA methyltransferase which may methylate two specific adjacent adenosines in the loop of a conserved hairpin near the 3'-end of 12S mitochondrial rRNA. Component of the mitochondrial transcription initiation complex, composed at least of TFB2M, TFAM and POLRMT that is required for basal transcription of mitochondrial DNA. In this complex TFAM recruits POLRMT to a specific promoter whereas TFB2M induces structural changes in POLRMT to enable promoter opening and trapping of the DNA non-template strand. Stimulates transcription independently of the methyltransferase activity. The polypeptide is Dimethyladenosine transferase 2, mitochondrial (Bos taurus (Bovine)).